The primary structure comprises 255 residues: Isoprenyl transferase (255 aa).

Asp-35 is an active-site residue. Asp-35 lines the Mg(2+) pocket. Residues 36-39, Trp-40, Arg-48, His-52, and 80-82 each bind substrate; these read GNGR and STE. Asn-83 (proton acceptor) is an active-site residue. Residues Trp-84, Arg-86, Arg-203, and 209-211 contribute to the substrate site; that span reads RIS. Mg(2+) is bound at residue Glu-222.

Belongs to the UPP synthase family. Homodimer. Mg(2+) serves as cofactor.

In terms of biological role, catalyzes the condensation of isopentenyl diphosphate (IPP) with allylic pyrophosphates generating different type of terpenoids. In Clostridium tetani (strain Massachusetts / E88), this protein is Isoprenyl transferase.